The chain runs to 141 residues: Large ribosomal subunit protein uL11 (141 aa).

The protein belongs to the universal ribosomal protein uL11 family. In terms of assembly, part of the ribosomal stalk of the 50S ribosomal subunit. Interacts with L10 and the large rRNA to form the base of the stalk. L10 forms an elongated spine to which L12 dimers bind in a sequential fashion forming a multimeric L10(L12)X complex. One or more lysine residues are methylated.

Forms part of the ribosomal stalk which helps the ribosome interact with GTP-bound translation factors. The protein is Large ribosomal subunit protein uL11 of Streptococcus pyogenes serotype M1.